The primary structure comprises 500 residues: DNA double-strand break repair helicase HerA (500 aa).

Residues arginine 142, 151-156, and 459-460 each bind ATP; these read GSGKSN and KI.

This sequence belongs to the HerA family. In terms of assembly, homohexamer. Forms a complex with NurA.

It carries out the reaction Couples ATP hydrolysis with the unwinding of duplex DNA at the replication fork by translocating in the 5'-3' direction. This creates two antiparallel DNA single strands (ssDNA). The leading ssDNA polymer is the template for DNA polymerase III holoenzyme which synthesizes a continuous strand.. The enzyme catalyses ATP + H2O = ADP + phosphate + H(+). The catalysed reaction is Couples ATP hydrolysis with the unwinding of duplex DNA by translocating in the 3'-5' direction.. ATPase activity is stimulated in the presence of linear double-stranded (ds)DNA. Helicase activity requires the presence of NurA. LhrC-Core (Hel112) inhibits the exonuclease activity of the HerA-NurA complex on ss- and dsDNA, has no effect on the nicking activity of NurA. Involved in DNA double-strand break (DSB) repair. Probably acts with NurA to stimulate resection of the 5' strand and produce the long 3' single-strand that is required for RadA loading. NurA and HerA together stimulate the end-resection of six nucleotides of a linear DNA substrate. Has DNA-dependent ATPase activity and bidirectional DNA helicase activity. Preferentially binds single stranded (ss)DNA, bubble and semiforked DNA substrate over other DNA molecules tested. Stimulates the exo- but not endonuclease activity of NurA. This Saccharolobus solfataricus (strain ATCC 35092 / DSM 1617 / JCM 11322 / P2) (Sulfolobus solfataricus) protein is DNA double-strand break repair helicase HerA.